The chain runs to 67 residues: Small ribosomal subunit protein eS27 (67 aa).

Positions 22, 25, 41, and 44 each coordinate Zn(2+). Residues 22–44 form a C4-type zinc finger; that stretch reads CPDCGNEQVTFSHAAMVVRCLVC.

The protein belongs to the eukaryotic ribosomal protein eS27 family. In terms of assembly, part of the 30S ribosomal subunit. Zn(2+) serves as cofactor.

The polypeptide is Small ribosomal subunit protein eS27 (Pyrobaculum calidifontis (strain DSM 21063 / JCM 11548 / VA1)).